The following is a 610-amino-acid chain: UvrABC system protein C (610 aa).

Positions 16–94 (SQPGVYRMYD…IKLYQPRYNV (79 aa)) constitute a GIY-YIG domain. Residues 204–239 (QQVLTQLITRMEEASQQLHFEDAARIRDQIQAVRRV) enclose the UVR domain.

The protein belongs to the UvrC family. Interacts with UvrB in an incision complex.

It is found in the cytoplasm. The UvrABC repair system catalyzes the recognition and processing of DNA lesions. UvrC both incises the 5' and 3' sides of the lesion. The N-terminal half is responsible for the 3' incision and the C-terminal half is responsible for the 5' incision. This chain is UvrABC system protein C, found in Yersinia pseudotuberculosis serotype O:1b (strain IP 31758).